Reading from the N-terminus, the 79-residue chain is Small ribosomal subunit protein bS18 (79 aa).

As to quaternary structure, part of the 30S ribosomal subunit. Forms a tight heterodimer with protein bS6. In terms of processing, both N-terminus methionine truncation and retention have been observed for this protein. Post-translationally, may be methylated up to 6 times, on undetermined residues.

Its function is as follows. Binds as a heterodimer with protein bS6 to the central domain of the 16S rRNA, where it helps stabilize the platform of the 30S subunit. This chain is Small ribosomal subunit protein bS18, found in Rhodopseudomonas palustris (strain ATCC BAA-98 / CGA009).